Here is a 459-residue protein sequence, read N- to C-terminus: Vitronectin (459 aa).

An N-terminal signal peptide occupies residues 1 to 19 (MAPLRPLLMLALLAWVALA). An SMB domain is found at 20 to 63 (DQESCKGRCTDGFIAERKCQCDELCSYYQSCCTDYVAECKPQVT). Disulfide bonds link C24/C28, C24/C40, C28/C58, C38/C40, C38/C51, C44/C50, and C51/C58. A Cell attachment site motif is present at residues 64-66 (RGD). A sulfotyrosine mark is found at Y75, Y78, and Y80. N87 and N146 each carry an N-linked (GlcNAc...) asparagine glycan. Hemopexin repeat units lie at residues 135 to 179 (GKPF…VWGI), 180 to 227 (KGPI…FKGI), and 228 to 285 (PDDV…FALM). Phosphoserine is present on residues S289 and S378. Residues 338-380 (LKPSQPKMTKSARRSGKRYRSRRGRGRGRGHSRSQKSHRQSRS) form a disordered region. Over residues 347–378 (KSARRSGKRYRSRRGRGRGRGHSRSQKSHRQS) the composition is skewed to basic residues. Sulfotyrosine is present on residues Y398 and Y401. A Hemopexin 4 repeat occupies 400-453 (DYKMDWLVPATCEPIQSVYFFSGEEYYRVNLRTQRVDTVTPPYPRSIAQYWLGC).

As to quaternary structure, monomer. Interacts with SERPINE1/PAI1 and C1QBP. Sulfated on tyrosine residues. Post-translationally, N- and O-glycosylated. In terms of processing, it has been suggested that the active SMB domain may be permitted considerable disulfide bond heterogeneity or variability, thus two alternate disulfide patterns based on 3D structures are described with 1 disulfide bond conserved in both. As to expression, plasma.

It localises to the secreted. Its subcellular location is the extracellular space. In terms of biological role, vitronectin is a cell adhesion and spreading factor found in serum and tissues. Vitronectin interact with glycosaminoglycans and proteoglycans. Is recognized by certain members of the integrin family and serves as a cell-to-substrate adhesion molecule. Inhibitor of the membrane-damaging effect of the terminal cytolytic complement pathway. This chain is Vitronectin (VTN), found in Sus scrofa (Pig).